The following is a 231-amino-acid chain: Elongation factor 1-delta 1 (231 aa).

Residue Ala-2 is modified to N-acetylalanine. The GST C-terminal domain maps to 10–73; the sequence is DAGLKKLDEH…LRISGVSAEG (64 aa). Disordered regions lie at residues 85 to 108 and 116 to 135; these read TEEAVATPPAADSKDAAADEEDDD and ETEEEKKAAEERAASVKAST. Over residues 119-129 the composition is skewed to basic and acidic residues; the sequence is EEKKAAEERAA.

It belongs to the EF-1-beta/EF-1-delta family. EF-1 is composed of 4 subunits: alpha, beta (1B-alpha=beta'), delta (1B-beta), and gamma (1B-gamma).

In terms of biological role, EF-1-beta and EF-1-delta stimulate the exchange of GDP bound to EF-1-alpha to GTP. The protein is Elongation factor 1-delta 1 of Arabidopsis thaliana (Mouse-ear cress).